A 307-amino-acid chain; its full sequence is N-acetylmuramic acid 6-phosphate etherase (307 aa).

The SIS domain maps to 62–225 (IVAAFQKGGR…TTASMIRIGK (164 aa)). Residue E90 is the Proton donor of the active site. E121 is an active-site residue.

This sequence belongs to the GCKR-like family. MurNAc-6-P etherase subfamily. In terms of assembly, homodimer.

The enzyme catalyses N-acetyl-D-muramate 6-phosphate + H2O = N-acetyl-D-glucosamine 6-phosphate + (R)-lactate. It functions in the pathway amino-sugar metabolism; 1,6-anhydro-N-acetylmuramate degradation. Its pathway is amino-sugar metabolism; N-acetylmuramate degradation. It participates in cell wall biogenesis; peptidoglycan recycling. Functionally, specifically catalyzes the cleavage of the D-lactyl ether substituent of MurNAc 6-phosphate, producing GlcNAc 6-phosphate and D-lactate. Together with AnmK, is also required for the utilization of anhydro-N-acetylmuramic acid (anhMurNAc) either imported from the medium or derived from its own cell wall murein, and thus plays a role in cell wall recycling. The sequence is that of N-acetylmuramic acid 6-phosphate etherase from Rhizobium rhizogenes (strain K84 / ATCC BAA-868) (Agrobacterium radiobacter).